Reading from the N-terminus, the 155-residue chain is Ribosome maturation factor RimP (155 aa).

The protein belongs to the RimP family.

It is found in the cytoplasm. Functionally, required for maturation of 30S ribosomal subunits. This is Ribosome maturation factor RimP from Parasynechococcus marenigrum (strain WH8102).